A 404-amino-acid polypeptide reads, in one-letter code: WD repeat and SOCS box-containing protein 2 (404 aa).

7 WD repeats span residues 16-55 (GRPH…LIPW), 81-140 (GSPK…IWEV), 144-183 (LLLL…IWDL), 188-226 (KQIQ…LWSM), 230-268 (TLIR…MWDP), 283-322 (DPAM…IWAL), and 325-362 (KTPI…FWTA). The tract at residues 68-87 (AKSRSSKNETKGRGSPKEKT) is disordered. The SOCS box domain occupies 356–404 (HVQFWTAPRVLSSLKHLCRKALRSFLTTYQVLALPIPKKMKEFLTYRTF).

The protein operates within protein modification; protein ubiquitination. In terms of biological role, may be a substrate-recognition component of a SCF-like ECS (Elongin-Cullin-SOCS-box protein) E3 ubiquitin ligase complex which mediates the ubiquitination and subsequent proteasomal degradation of target proteins. This is WD repeat and SOCS box-containing protein 2 (WSB2) from Homo sapiens (Human).